The sequence spans 301 residues: Putative F-box/LRR-repeat protein 19 (301 aa).

The 49-residue stretch at 18–66 folds into the F-box domain; it reads PDWSELTRECLLDIFSRLSQEQRWIGPMLVSKNWMNACYDPTLNTIFDL. 5 LRR repeats span residues 108–133, 134–159, 160–185, 231–256, and 257–282; these read IRHC…WIKN, CPNV…DISY, SYGI…KRNL, YSTL…DLRG, and CISL…IKPD.

The sequence is that of Putative F-box/LRR-repeat protein 19 (FBL19) from Arabidopsis thaliana (Mouse-ear cress).